A 427-amino-acid polypeptide reads, in one-letter code: uncharacterized protein (427 aa).

A coiled-coil region spans residues 135–168 (PILKQKLVSLESKVKKIDKEMEKHNDLLKEIQEN).

This is an uncharacterized protein from Arabidopsis thaliana (Mouse-ear cress).